We begin with the raw amino-acid sequence, 75 residues long: Protein SlyX homolog (75 aa).

Belongs to the SlyX family.

The sequence is that of Protein SlyX homolog from Vibrio vulnificus (strain CMCP6).